Consider the following 659-residue polypeptide: Threonine--tRNA ligase (659 aa).

The region spanning 1-60 (MTVYLPDGKPLELPEGATAKDVARALGEGWERRAVGAIVDGELYDLLKPLPQGAKVRLLT) is the TGS domain. The catalytic stretch occupies residues 252–552 (DHRRLGRELE…LIEHFAGDFP (301 aa)). Zn(2+)-binding residues include cysteine 349, histidine 400, and histidine 529.

This sequence belongs to the class-II aminoacyl-tRNA synthetase family. In terms of assembly, homodimer. Requires Zn(2+) as cofactor.

It localises to the cytoplasm. It carries out the reaction tRNA(Thr) + L-threonine + ATP = L-threonyl-tRNA(Thr) + AMP + diphosphate + H(+). Catalyzes the attachment of threonine to tRNA(Thr) in a two-step reaction: L-threonine is first activated by ATP to form Thr-AMP and then transferred to the acceptor end of tRNA(Thr). Also edits incorrectly charged L-seryl-tRNA(Thr). This is Threonine--tRNA ligase from Thermus thermophilus (strain ATCC BAA-163 / DSM 7039 / HB27).